A 388-amino-acid polypeptide reads, in one-letter code: MTTVSRHYVLAAGGTGGHLIPAFALAVELDRRGHHVALVTDERGAKIPGKPDFLPAHVLPAGRLGKNPVALFKGLRAIWQGRAMALRLFESFEPSCVIGFGGYPALPALLAAHAARIPTVIHEQNAVLGRVNRLLAKRVDAIATAYGEVDRLDPKLWGKVHRVGNPVRPDVLALRGEPFPEFTEDSLFRVLVTGGSQGASILSEVVPDGLAMLPPALRHRLQVTQQCRPEDLEVVRARYAAHEIPAELGTYFEDMQARLAGTHLFIGRAGASTIAELTAVGRPAILVPLPIATDDHQAANTREVVAAGGARAIRQSGFTPKELAKQIQAMAQHPHTLANAAHAAWNCGLPNAVKDLADLVESFGASPIMDVIRLDSTVSAASGQEQLA.

UDP-N-acetyl-alpha-D-glucosamine contacts are provided by residues 15 to 17 (TGG), N125, R168, S196, and Q297.

Belongs to the glycosyltransferase 28 family. MurG subfamily.

The protein localises to the cell inner membrane. It carries out the reaction di-trans,octa-cis-undecaprenyl diphospho-N-acetyl-alpha-D-muramoyl-L-alanyl-D-glutamyl-meso-2,6-diaminopimeloyl-D-alanyl-D-alanine + UDP-N-acetyl-alpha-D-glucosamine = di-trans,octa-cis-undecaprenyl diphospho-[N-acetyl-alpha-D-glucosaminyl-(1-&gt;4)]-N-acetyl-alpha-D-muramoyl-L-alanyl-D-glutamyl-meso-2,6-diaminopimeloyl-D-alanyl-D-alanine + UDP + H(+). Its pathway is cell wall biogenesis; peptidoglycan biosynthesis. Cell wall formation. Catalyzes the transfer of a GlcNAc subunit on undecaprenyl-pyrophosphoryl-MurNAc-pentapeptide (lipid intermediate I) to form undecaprenyl-pyrophosphoryl-MurNAc-(pentapeptide)GlcNAc (lipid intermediate II). This is UDP-N-acetylglucosamine--N-acetylmuramyl-(pentapeptide) pyrophosphoryl-undecaprenol N-acetylglucosamine transferase from Novosphingobium aromaticivorans (strain ATCC 700278 / DSM 12444 / CCUG 56034 / CIP 105152 / NBRC 16084 / F199).